The primary structure comprises 350 residues: Secreted effector protein PipB2 (350 aa).

4 Pentapeptide repeat domains span residues 162 to 201 (ANLT…NLSG), 202 to 241 (ASLG…SLLG), 247 to 286 (CNCS…IMEG), and 287 to 326 (AVLT…TLTD).

In terms of assembly, interacts with the host kinesin light chain (KLC), a subunit of the kinesin-1 motor complex.

It is found in the secreted. It localises to the host membrane. Its function is as follows. Effector proteins function to alter host cell physiology and promote bacterial survival in host tissues. Involved in the reorganization of late endosome/lysosome (LE/Lys) compartments in mammalian cells. Necessary and sufficient to link kinesin-1 onto the Salmonella-containing vacuole (SCV) membrane. Required for centrifugal extension of lysosomal glycoprotein-rich membrane tubules, known as Salmonella-induced filaments (Sifs), away from the SCV and toward the cell periphery. Required for virulence, but not for intracellular survival and replication in phagocytic cells. The chain is Secreted effector protein PipB2 (pipB2) from Salmonella typhi.